A 170-amino-acid chain; its full sequence is Ribosome maturation factor RimM (170 aa).

The 74-residue stretch at 97–170 folds into the PRC barrel domain; the sequence is KNEFYWTDLI…QIRVEWGSDW (74 aa).

It belongs to the RimM family. In terms of assembly, binds ribosomal protein uS19.

Its subcellular location is the cytoplasm. Functionally, an accessory protein needed during the final step in the assembly of 30S ribosomal subunit, possibly for assembly of the head region. Essential for efficient processing of 16S rRNA. May be needed both before and after RbfA during the maturation of 16S rRNA. It has affinity for free ribosomal 30S subunits but not for 70S ribosomes. This Dechloromonas aromatica (strain RCB) protein is Ribosome maturation factor RimM.